Reading from the N-terminus, the 438-residue chain is Enolase (438 aa).

Gln-174 is a (2R)-2-phosphoglycerate binding site. Residue Glu-216 is the Proton donor of the active site. 3 residues coordinate Mg(2+): Asp-253, Glu-297, and Asp-324. (2R)-2-phosphoglycerate-binding residues include Lys-349, Arg-378, Ser-379, and Lys-400. Lys-349 acts as the Proton acceptor in catalysis.

The protein belongs to the enolase family. As to quaternary structure, component of the RNA degradosome, a multiprotein complex involved in RNA processing and mRNA degradation. Mg(2+) serves as cofactor.

The protein localises to the cytoplasm. It is found in the secreted. It localises to the cell surface. The enzyme catalyses (2R)-2-phosphoglycerate = phosphoenolpyruvate + H2O. It participates in carbohydrate degradation; glycolysis; pyruvate from D-glyceraldehyde 3-phosphate: step 4/5. In terms of biological role, catalyzes the reversible conversion of 2-phosphoglycerate (2-PG) into phosphoenolpyruvate (PEP). It is essential for the degradation of carbohydrates via glycolysis. The polypeptide is Enolase (Psychrobacter arcticus (strain DSM 17307 / VKM B-2377 / 273-4)).